Here is a 238-residue protein sequence, read N- to C-terminus: Orotidine 5'-phosphate decarboxylase (238 aa).

Substrate contacts are provided by residues Asp-13, Lys-35, 62–71, Thr-121, Arg-182, Gln-191, Gly-211, and Arg-212; that span reads DLKFHDIPNT. Lys-64 (proton donor) is an active-site residue.

Belongs to the OMP decarboxylase family. Type 1 subfamily. Homodimer.

The catalysed reaction is orotidine 5'-phosphate + H(+) = UMP + CO2. It functions in the pathway pyrimidine metabolism; UMP biosynthesis via de novo pathway; UMP from orotate: step 2/2. Catalyzes the decarboxylation of orotidine 5'-monophosphate (OMP) to uridine 5'-monophosphate (UMP). This is Orotidine 5'-phosphate decarboxylase from Saccharophagus degradans (strain 2-40 / ATCC 43961 / DSM 17024).